We begin with the raw amino-acid sequence, 277 residues long: Large ribosomal subunit protein uL2 (277 aa).

Disordered regions lie at residues Met1–Asp20, Thr27–Gly55, and Lys207–Ser277. Polar residues predominate over residues Thr27–Val48. Composition is skewed to basic residues over residues Lys207–Val220 and Thr259–Ser277.

The protein belongs to the universal ribosomal protein uL2 family. In terms of assembly, part of the 50S ribosomal subunit. Forms a bridge to the 30S subunit in the 70S ribosome.

One of the primary rRNA binding proteins. Required for association of the 30S and 50S subunits to form the 70S ribosome, for tRNA binding and peptide bond formation. It has been suggested to have peptidyltransferase activity; this is somewhat controversial. Makes several contacts with the 16S rRNA in the 70S ribosome. The sequence is that of Large ribosomal subunit protein uL2 from Gloeothece citriformis (strain PCC 7424) (Cyanothece sp. (strain PCC 7424)).